The following is a 493-amino-acid chain: Guanosine-5'-triphosphate,3'-diphosphate pyrophosphatase (493 aa).

Belongs to the GppA/Ppx family. GppA subfamily.

It catalyses the reaction guanosine 3'-diphosphate 5'-triphosphate + H2O = guanosine 3',5'-bis(diphosphate) + phosphate + H(+). It participates in purine metabolism; ppGpp biosynthesis; ppGpp from GTP: step 2/2. Its function is as follows. Catalyzes the conversion of pppGpp to ppGpp. Guanosine pentaphosphate (pppGpp) is a cytoplasmic signaling molecule which together with ppGpp controls the 'stringent response', an adaptive process that allows bacteria to respond to amino acid starvation, resulting in the coordinated regulation of numerous cellular activities. The protein is Guanosine-5'-triphosphate,3'-diphosphate pyrophosphatase of Salmonella gallinarum (strain 287/91 / NCTC 13346).